The chain runs to 183 residues: Ribosome rescue factor SmrB (183 aa).

A Smr domain is found at 98–173; the sequence is LDLHGLTQLQ…GDAALLVLIE (76 aa).

It belongs to the SmrB family. As to quaternary structure, associates with collided ribosomes, but not with correctly translating polysomes.

Its function is as follows. Acts as a ribosome collision sensor. Detects stalled/collided disomes (pairs of ribosomes where the leading ribosome is stalled and a second ribosome has collided with it) and endonucleolytically cleaves mRNA at the 5' boundary of the stalled ribosome. Stalled/collided disomes form a new interface (primarily via the 30S subunits) that binds SmrB. Cleaved mRNA becomes available for tmRNA ligation, leading to ribosomal subunit dissociation and rescue of stalled ribosomes. The protein is Ribosome rescue factor SmrB of Salmonella arizonae (strain ATCC BAA-731 / CDC346-86 / RSK2980).